The chain runs to 570 residues: Dual specificity testis-specific protein kinase 2 (570 aa).

The 256-residue stretch at 58 to 313 (DFTREKIGSG…EIGKTLEEIM (256 aa)) folds into the Protein kinase domain. ATP is bound by residues 64-72 (IGSGFFSEV) and K87. The active-site Proton acceptor is the D176. S219 bears the Phosphoserine; by autocatalysis mark. Phosphoserine is present on residues S369, S456, and S460. Residues 513-570 (DCSNPQEENGFVPRPKGTSPCSGAASEEMEVEEERPRRAPVHFSISGISLQTQGEQDG) form a disordered region. The segment covering 558–570 (SGISLQTQGEQDG) has biased composition (polar residues).

The protein belongs to the protein kinase superfamily. TKL Ser/Thr protein kinase family. Requires Mg(2+) as cofactor. It depends on Mn(2+) as a cofactor. As to expression, predominantly expressed in testis and prostate. Found predominantly in non-germinal Sertoli cells.

The protein localises to the nucleus. It catalyses the reaction L-seryl-[protein] + ATP = O-phospho-L-seryl-[protein] + ADP + H(+). The enzyme catalyses L-threonyl-[protein] + ATP = O-phospho-L-threonyl-[protein] + ADP + H(+). The catalysed reaction is L-tyrosyl-[protein] + ATP = O-phospho-L-tyrosyl-[protein] + ADP + H(+). Its activity is regulated as follows. Activated by autophosphorylation on Ser-219. Functionally, dual specificity protein kinase activity catalyzing autophosphorylation and phosphorylation of exogenous substrates on both serine/threonine and tyrosine residues. Phosphorylates cofilin at 'Ser-3'. May play an important role in spermatogenesis. The chain is Dual specificity testis-specific protein kinase 2 (Tesk2) from Rattus norvegicus (Rat).